Consider the following 678-residue polypeptide: Glycine--tRNA ligase beta subunit (678 aa).

It belongs to the class-II aminoacyl-tRNA synthetase family. Tetramer of two alpha and two beta subunits.

It localises to the cytoplasm. The enzyme catalyses tRNA(Gly) + glycine + ATP = glycyl-tRNA(Gly) + AMP + diphosphate. This is Glycine--tRNA ligase beta subunit from Streptococcus pneumoniae (strain P1031).